Reading from the N-terminus, the 189-residue chain is Protein GrpE (189 aa).

Residues 1–24 (MADEQTVDTQNPEANQAPEASGDD) are disordered.

This sequence belongs to the GrpE family. As to quaternary structure, homodimer.

It localises to the cytoplasm. Participates actively in the response to hyperosmotic and heat shock by preventing the aggregation of stress-denatured proteins, in association with DnaK and GrpE. It is the nucleotide exchange factor for DnaK and may function as a thermosensor. Unfolded proteins bind initially to DnaJ; upon interaction with the DnaJ-bound protein, DnaK hydrolyzes its bound ATP, resulting in the formation of a stable complex. GrpE releases ADP from DnaK; ATP binding to DnaK triggers the release of the substrate protein, thus completing the reaction cycle. Several rounds of ATP-dependent interactions between DnaJ, DnaK and GrpE are required for fully efficient folding. The protein is Protein GrpE of Pseudomonas fluorescens (strain Pf0-1).